A 589-amino-acid polypeptide reads, in one-letter code: MASKAMPRAPPAAPNLQSLKLCSQNDSSLETTSPSKRSALVPGRSAESSKPNSEVVQKEQKSTQHQNESIDLTGSNDPAEVKAEGNLVPKRLADEEKGVVEDGIANGSLKSSSALGKEHGIASASGSARLVGRSETGERGFSSSRCRPSTSSDVSDESACSSISSVTKPHKANDSRWEAIQMIRTRDGILGLSHFKLLKKLGCGDIGSVYLSELNGTKSYFAMKVMDKASLASRKKLLRAQTEKEILQCLDHPFLPTLYTHFETDKFSCLVMEFCPGGDLHTLRQRQRGKYFPEQAVKFYVAEILLAMEYLHMLGIIYRDLKPENVLVREDGHIMLSDFDLSLRCAVSPTLIRSSNPDAEALRKNNQAYCVQPACVEPSCMIQPSCATPTTCFGPRFFSKSKKDRKPKPEVVNQVSPWPELIAEPSDARSMSFVGTHEYLAPEIIKGEGHGSAVDWWTFGIFLYELLFGKTPFKGSGNRATLFNVIGQPLRFPEYPVVSFSARDLIRGLLVKEPQQRLGCKRGATEIKQHPFFEGVNWALIRCASPPEVPRPVEIERPPKQPVSTSEPAAAPSDAAQKSSDSYLEFDFF.

The segment at 1 to 167 is disordered; the sequence is MASKAMPRAP…SACSSISSVT (167 aa). Composition is skewed to polar residues over residues 15–36, 46–55, and 63–76; these read NLQSLKLCSQNDSSLETTSPSK, AESSKPNSEV, and TQHQNESIDLTGSN. The span at 91–100 shows a compositional bias: basic and acidic residues; the sequence is RLADEEKGVV. The span at 142–165 shows a compositional bias: low complexity; that stretch reads SSSRCRPSTSSDVSDESACSSISS. The region spanning 195–533 is the Protein kinase domain; the sequence is FKLLKKLGCG…ATEIKQHPFF (339 aa). ATP contacts are provided by residues 201 to 209 and lysine 224; that span reads LGCGDIGSV. Aspartate 320 serves as the catalytic Proton acceptor. The disordered stretch occupies residues 551 to 589; sequence RPVEIERPPKQPVSTSEPAAAPSDAAQKSSDSYLEFDFF.

Belongs to the protein kinase superfamily. Ser/Thr protein kinase family.

The enzyme catalyses L-seryl-[protein] + ATP = O-phospho-L-seryl-[protein] + ADP + H(+). It carries out the reaction L-threonyl-[protein] + ATP = O-phospho-L-threonyl-[protein] + ADP + H(+). In terms of biological role, may play a role in the regulation of metabolism and signal transduction processes. In Oryza sativa subsp. indica (Rice), this protein is Protein kinase G11A.